A 457-amino-acid chain; its full sequence is Transcription factor E2F3 (457 aa).

The segment at 80–171 (LLPSVPGTEP…PKSPSEKTRY (92 aa)) is disordered. Polar residues predominate over residues 93–102 (SLYTTPQGPS). Residues 96–145 (TTPQGPSSRVGLLQQPPAPGRGGGGGPPAKRRLELGESGHQYLSDGLKTP) are cyclin A/CDK2 binding. The DNA-binding element occupies 147–237 (GKGRAALRSP…KNNVQWMGCS (91 aa)). Over residues 155–164 (SPDSPKTPKS) the composition is skewed to low complexity. The interval 196 to 217 (LNKAAEVLKVQKRRIYDITNVL) is leucine-zipper. The short motif at 201–237 (EVLKVQKRRIYDITNVLEGIHLIKKKSKNNVQWMGCS) is the DEF box element. The segment at 238-329 (LSEDGGMLAQ…VPDSIESLQI (92 aa)) is dimerization. The segment at 350 to 387 (HRPMKTNNQDHNGNIPKPTSKDLASNNSGHSDCSVSTA) is disordered. A compositionally biased stretch (polar residues) spans 371–387 (DLASNNSGHSDCSVSTA). The tract at residues 383 to 457 (SVSTANLSPL…LPLVEDFMCS (75 aa)) is transactivation. The retinoblastoma protein binding stretch occupies residues 424-441 (EDYLLSLGEEEGISDLFD).

This sequence belongs to the E2F/DP family. As to quaternary structure, component of the DRTF1/E2F transcription factor complex. Binds cooperatively with TFDP1/Dp-1 to E2F sites. Interacts with retinoblastoma protein RB1 and related proteins (such as RBL1) that inhibit the E2F transactivation domain. Binds EAPP.

The protein localises to the nucleus. Its function is as follows. Transcription activator that binds DNA cooperatively with DP proteins through the E2 recognition site, 5'-TTTC[CG]CGC-3' found in the promoter region of a number of genes whose products are involved in cell cycle regulation or in DNA replication. The DRTF1/E2F complex functions in the control of cell-cycle progression from G1 to S phase. E2F3 binds specifically to RB1 in a cell-cycle dependent manner. Inhibits adipogenesis, probably through the repression of CEBPA binding to its target gene promoters. In Mus musculus (Mouse), this protein is Transcription factor E2F3 (E2f3).